The following is a 367-amino-acid chain: Quinolinate synthase (367 aa).

Iminosuccinate is bound by residues histidine 46 and serine 63. Cysteine 110 contacts [4Fe-4S] cluster. Iminosuccinate is bound by residues 141–143 (YVN) and serine 162. A [4Fe-4S] cluster-binding site is contributed by cysteine 229. Iminosuccinate-binding positions include 255 to 257 (HPE) and threonine 272. Cysteine 319 is a binding site for [4Fe-4S] cluster.

The protein belongs to the quinolinate synthase family. Type 3 subfamily. [4Fe-4S] cluster serves as cofactor.

The protein resides in the cytoplasm. The enzyme catalyses iminosuccinate + dihydroxyacetone phosphate = quinolinate + phosphate + 2 H2O + H(+). It participates in cofactor biosynthesis; NAD(+) biosynthesis; quinolinate from iminoaspartate: step 1/1. Its function is as follows. Catalyzes the condensation of iminoaspartate with dihydroxyacetone phosphate to form quinolinate. The chain is Quinolinate synthase from Bacillus velezensis (strain DSM 23117 / BGSC 10A6 / LMG 26770 / FZB42) (Bacillus amyloliquefaciens subsp. plantarum).